The chain runs to 273 residues: Large ribosomal subunit protein uL2 (273 aa).

The tract at residues 228 to 273 (VDHPHGGGEGKTSGGRHPVTPWGFPTKGKKTRKNKRTSKFIVKKRK) is disordered. The span at 254 to 273 (KGKKTRKNKRTSKFIVKKRK) shows a compositional bias: basic residues.

The protein belongs to the universal ribosomal protein uL2 family. Part of the 50S ribosomal subunit. Forms a bridge to the 30S subunit in the 70S ribosome.

Its function is as follows. One of the primary rRNA binding proteins. Required for association of the 30S and 50S subunits to form the 70S ribosome, for tRNA binding and peptide bond formation. It has been suggested to have peptidyltransferase activity; this is somewhat controversial. Makes several contacts with the 16S rRNA in the 70S ribosome. This chain is Large ribosomal subunit protein uL2, found in Rickettsia felis (strain ATCC VR-1525 / URRWXCal2) (Rickettsia azadi).